Here is a 1147-residue protein sequence, read N- to C-terminus: Nucleolar protein 8 (1147 aa).

The 82-residue stretch at 8–89 folds into the RRM domain; that stretch reads KRLFVGGLGQ…GTLQIQLAKE (82 aa). A Glycyl lysine isopeptide (Lys-Gly) (interchain with G-Cter in SUMO2) cross-link involves residue Lys-225. Phosphoserine occurs at positions 300 and 306. A Glycyl lysine isopeptide (Lys-Gly) (interchain with G-Cter in SUMO2) cross-link involves residue Lys-316. At Tyr-362 the chain carries Phosphotyrosine. Residues Ser-364 and Ser-365 each carry the phosphoserine modification. The residue at position 367 (Thr-367) is a Phosphothreonine. Positions 379-401 are disordered; sequence KVKNSAESSQPERTVSKKSSFQK. Positions 383–400 are enriched in polar residues; the sequence is SAESSQPERTVSKKSSFQ. A Phosphoserine modification is found at Ser-416. 7 disordered regions span residues 427 to 452, 472 to 511, 592 to 659, 686 to 741, 766 to 888, 932 to 963, and 986 to 1017; these read KFVN…EEYK, AGSH…DLYN, MENG…PLKA, KALE…EDNQ, ANLD…NEDE, KHDH…AEKL, and SNTD…TLAC. Acidic residues predominate over residues 441-450; that stretch reads DSEESEEDEE. Composition is skewed to polar residues over residues 592–610 and 629–650; these read MENG…TSCQ and TFEN…STNP. Composition is skewed to basic and acidic residues over residues 700–714 and 732–741; these read SLEK…EDPQ and AKDKQAEDNQ. Ser-704 is modified (phosphoserine). The residue at position 777 (Thr-777) is a Phosphothreonine. 2 positions are modified to phosphoserine: Ser-783 and Ser-787. A compositionally biased stretch (basic and acidic residues) spans 799–809; the sequence is CPEKELMKESV. Phosphoserine occurs at positions 819, 820, 825, 827, and 872. Basic and acidic residues predominate over residues 857–883; the sequence is SDERFRMDSRFLESDSEDEKKELNEDK. 2 coiled-coil regions span residues 868 to 898 and 937 to 963; these read LESD…KTLN and IYER…AEKL. Residues 994–1011 show a composition bias toward basic and acidic residues; sequence DVPRTEAGAREGTGKIRN. Lys-1038 is covalently cross-linked (Glycyl lysine isopeptide (Lys-Gly) (interchain with G-Cter in SUMO2)). The disordered stretch occupies residues 1055 to 1086; it reads PNDPRFQDSSSEEEDIAEEADHSKPSPGEAVP. Phosphoserine occurs at positions 1063, 1064, 1065, and 1080.

As to quaternary structure, interacts with the GTP form of RRAGA, RRAGC and RRAGD. Interacts with NIP7. Interacts with DDX18; the interaction is RNA-dependent. Interacts with DDX47; the interaction is RNA-dependent. In terms of processing, phosphorylated.

It is found in the nucleus. The protein resides in the nucleolus. In terms of biological role, plays an essential role in the survival of diffuse-type gastric cancer cells. Acts as a nucleolar anchoring protein for DDX47. May be involved in regulation of gene expression at the post-transcriptional level or in ribosome biogenesis in cancer cells. The sequence is that of Nucleolar protein 8 from Mus musculus (Mouse).